The sequence spans 219 residues: Lipid transferase CIDEA (219 aa).

The region spanning 33-110 (PARPFRVSNH…ILEKGQKWMP (78 aa)) is the CIDE-N domain. Residues 163–180 (CTGLKGLLRSLLRFLSYS) are amphipathic helix.

It belongs to the CIDE family. As to quaternary structure, homodimer. Interacts with CIDEC. Directly interacts with CEBPB. Interacts with isoform CLSTN3beta of CLSTN3; inhibiting the lipid transferase activity of CIDEA. In terms of tissue distribution, expressed in omental and subcutaneous adipose tissue (at protein level).

Its subcellular location is the lipid droplet. The protein resides in the nucleus. The catalysed reaction is a triacyl-sn-glycerol(in) = a triacyl-sn-glycerol(out). Its function is as follows. Lipid transferase that promotes unilocular lipid droplet formation by mediating lipid droplet fusion. Lipid droplet fusion promotes their enlargement, restricting lipolysis and favoring lipid storage. Localizes on the lipid droplet surface, at focal contact sites between lipid droplets, and mediates atypical lipid droplet fusion by promoting directional net neutral lipid transfer from the smaller to larger lipid droplets. The transfer direction may be driven by the internal pressure difference between the contacting lipid droplet pair and occurs at a lower rate than that promoted by CIDEC. May also act as a CEBPB coactivator in epithelial cells to control the expression of a subset of CEBPB downstream target genes, including ID2, IGF1, PRLR, SOCS1, SOCS3, XDH, but not casein. By interacting with CEBPB, strengthens the association of CEBPB with the XDH promoter, increases histone acetylation and dissociates HDAC1 from the promoter. When overexpressed, induces apoptosis; the physiological significance of its role in apoptosis is unclear. This chain is Lipid transferase CIDEA, found in Homo sapiens (Human).